The following is a 473-amino-acid chain: Photosystem II CP43 reaction center protein (473 aa).

Positions 1–14 (MKTLYSLRRFYHVE) are excised as a propeptide. Position 15 is an N-acetylthreonine (Thr-15). Position 15 is a phosphothreonine (Thr-15). The next 5 membrane-spanning stretches (helical) occupy residues 69–93 (LFEV…PHLA), 134–155 (LLGP…KDRN), 178–200 (KALY…RKIT), 255–275 (KPFA…LSYS), and 291–312 (WFNN…ASQA). [CaMn4O5] cluster is bound at residue Glu-367. The chain crosses the membrane as a helical span at residues 447–471 (RARAAAAGFEKGIDRDFEPVLSMTP).

The protein belongs to the PsbB/PsbC family. PsbC subfamily. In terms of assembly, PSII is composed of 1 copy each of membrane proteins PsbA, PsbB, PsbC, PsbD, PsbE, PsbF, PsbH, PsbI, PsbJ, PsbK, PsbL, PsbM, PsbT, PsbX, PsbY, PsbZ, Psb30/Ycf12, at least 3 peripheral proteins of the oxygen-evolving complex and a large number of cofactors. It forms dimeric complexes. Binds multiple chlorophylls and provides some of the ligands for the Ca-4Mn-5O cluster of the oxygen-evolving complex. It may also provide a ligand for a Cl- that is required for oxygen evolution. PSII binds additional chlorophylls, carotenoids and specific lipids. is required as a cofactor.

Its subcellular location is the plastid. The protein resides in the chloroplast thylakoid membrane. One of the components of the core complex of photosystem II (PSII). It binds chlorophyll and helps catalyze the primary light-induced photochemical processes of PSII. PSII is a light-driven water:plastoquinone oxidoreductase, using light energy to abstract electrons from H(2)O, generating O(2) and a proton gradient subsequently used for ATP formation. This Arabis hirsuta (Hairy rock-cress) protein is Photosystem II CP43 reaction center protein.